Here is a 101-residue protein sequence, read N- to C-terminus: Aspartyl/glutamyl-tRNA(Asn/Gln) amidotransferase subunit C (101 aa).

Residues 75-101 (QEALSGAPDAEEQRFRVPRILDEDVAS) are disordered. Residues 85 to 101 (EEQRFRVPRILDEDVAS) show a composition bias toward basic and acidic residues.

Belongs to the GatC family. Heterotrimer of A, B and C subunits.

The enzyme catalyses L-glutamyl-tRNA(Gln) + L-glutamine + ATP + H2O = L-glutaminyl-tRNA(Gln) + L-glutamate + ADP + phosphate + H(+). It catalyses the reaction L-aspartyl-tRNA(Asn) + L-glutamine + ATP + H2O = L-asparaginyl-tRNA(Asn) + L-glutamate + ADP + phosphate + 2 H(+). Functionally, allows the formation of correctly charged Asn-tRNA(Asn) or Gln-tRNA(Gln) through the transamidation of misacylated Asp-tRNA(Asn) or Glu-tRNA(Gln) in organisms which lack either or both of asparaginyl-tRNA or glutaminyl-tRNA synthetases. The reaction takes place in the presence of glutamine and ATP through an activated phospho-Asp-tRNA(Asn) or phospho-Glu-tRNA(Gln). In Salinispora arenicola (strain CNS-205), this protein is Aspartyl/glutamyl-tRNA(Asn/Gln) amidotransferase subunit C.